The chain runs to 64 residues: Metallothionein (64 aa).

The protein belongs to the metallothionein superfamily. Type 4 family.

In terms of biological role, metallothioneins have a high content of cysteine residues that bind various heavy metals. The polypeptide is Metallothionein (Sterechinus neumayeri (Antarctic sea urchin)).